A 1094-amino-acid chain; its full sequence is DNA polymerase delta catalytic subunit (1094 aa).

Zn(2+) contacts are provided by cysteine 1003, cysteine 1006, cysteine 1016, and cysteine 1019. A CysA-type zinc finger spans residues 1003–1019 (CIGCNSSIKKPPLCNHC). [4Fe-4S] cluster contacts are provided by cysteine 1049, cysteine 1052, cysteine 1062, and cysteine 1067. Positions 1049–1067 (CQRCQGNLHVDVICMNRDC) match the CysB motif motif.

The protein belongs to the DNA polymerase type-B family. In terms of assembly, heterodimer composed of a catalytic subunit POLD and a small regulatory subunit. [4Fe-4S] cluster serves as cofactor. The cofactor is Mg(2+).

Its subcellular location is the nucleus. The enzyme catalyses DNA(n) + a 2'-deoxyribonucleoside 5'-triphosphate = DNA(n+1) + diphosphate. Its activity is regulated as follows. The small regulatory subunit delta and PCNA1 increase POLD catalytic activity. In terms of biological role, this polymerase possesses two enzymatic activities: DNA synthesis (polymerase) and an exonucleolytic activity that degrades single-stranded DNA in the 3'- to 5'-direction. The polypeptide is DNA polymerase delta catalytic subunit (POLD) (Plasmodium falciparum (isolate K1 / Thailand)).